The chain runs to 253 residues: MRILLSNDDGVHAPGIQTLAKALREFADVQVVAPDRNRSGASNSLTLESSLRTFTFENGDIAVQMGTPTDCVYLGVNALMRPRPDIVVSGINAGPNLGDDVIYSGTVAAAMEGRHFGFPALAVSLDGHNHYDTAAAVTCSILRALCEEPLRTGRILNINVPDLPLDQIKGIRVTRCGTRHPADQVIPQQDPRGNTLYWIGPPGGKCDAGPGTDFAAVDEGYVSITPLRVDLTAHSAQDVVSDWLNSVGVGTQW.

Residues Asp-8, Asp-9, Ser-39, and Asn-92 each contribute to the a divalent metal cation site.

Belongs to the SurE nucleotidase family. A divalent metal cation serves as cofactor.

The protein localises to the cytoplasm. It carries out the reaction a ribonucleoside 5'-phosphate + H2O = a ribonucleoside + phosphate. The catalysed reaction is a ribonucleoside 3'-phosphate + H2O = a ribonucleoside + phosphate. It catalyses the reaction [phosphate](n) + H2O = [phosphate](n-1) + phosphate + H(+). Nucleotidase with a broad substrate specificity as it can dephosphorylate various ribo- and deoxyribonucleoside 5'-monophosphates and ribonucleoside 3'-monophosphates with highest affinity to 3'-AMP. Also hydrolyzes polyphosphate (exopolyphosphatase activity) with the preference for short-chain-length substrates (P20-25). Might be involved in the regulation of dNTP and NTP pools, and in the turnover of 3'-mononucleotides produced by numerous intracellular RNases (T1, T2, and F) during the degradation of various RNAs. In Shigella dysenteriae serotype 1 (strain Sd197), this protein is 5'/3'-nucleotidase SurE.